A 237-amino-acid chain; its full sequence is UPF0758 protein Veis_1654 (237 aa).

The region spanning 115-237 (VFDTPDAVKH…ALSMAEMGLL (123 aa)) is the MPN domain. Zn(2+) contacts are provided by His186, His188, and Asp199. Positions 186-199 (HNHPSGSVQPSRAD) match the JAMM motif motif.

It belongs to the UPF0758 family.

In Verminephrobacter eiseniae (strain EF01-2), this protein is UPF0758 protein Veis_1654.